We begin with the raw amino-acid sequence, 1208 residues long: Defective chorion protein, FC125 isoform (1208 aa).

Positions 1–19 are cleaved as a signal peptide; it reads MRLFSLLPLLALLVVQAAG. 3 disordered regions span residues 23–60, 184–212, and 268–294; these read VTSD…PSIN, APAP…PDAP, and PAQP…EDPY. The segment covering 32–41 has biased composition (polar residues); that stretch reads AGSTTNSTTD. The span at 268–280 shows a compositional bias: low complexity; sequence PAQPAAAGTDAQA. A run of 5 repeats spans residues 493 to 518, 519 to 544, 545 to 570, 571 to 596, and 597 to 622. The segment at 493–788 is 12 X 26 AA approximate tandem repeats, Glu, Met-rich; that stretch reads QNPMMMQQRQ…IQQQQRQMMQ (296 aa). One copy of the 6; approximate repeat lies at 623–652; the sequence is QNPMMMQQRQWSEEQAKIQHDQQMAQQMAQ. Residues 653–680 form a 7; approximate repeat; the sequence is QGLMMTEQRQRQWSEDQAKIQQAQQMAQ. One copy of the 8; approximate repeat lies at 681–696; it reads QTPMMMPQMQQRQWTE. Residues 697-720 form a 9; approximate repeat; that stretch reads DPQMVQQMQQRQWAEDQTRMQMAQ. A 10; approximate repeat occupies 721–733; it reads QNPMMQQQRQMAE. The stretch at 734 to 758 is one 11; approximate repeat; sequence NPQMMQQRQWSEEQTKIEQAQQMAQ. The stretch at 759-788 is one 12; approximate repeat; the sequence is QNQMMMQQMQQRQWSEDQAQIQQQQRQMMQ. Residues 828-839 show a composition bias toward acidic residues; the sequence is EDEDNKAEDDLV. Disordered stretches follow at residues 828 to 875, 944 to 1010, and 1114 to 1208; these read EDED…SKSA, RTIN…GSIF, and VQPP…DVDD. A compositionally biased stretch (polar residues) spans 957–977; that stretch reads SESQKSNSNPPTTLTPAPQEQ. 2 stretches are compositionally biased toward acidic residues: residues 1163-1178 and 1194-1208; these read PEPD…EPSE and NDID…DVDD.

Its subcellular location is the secreted. Required for proper assembly of the eggshell. The polypeptide is Defective chorion protein, FC125 isoform (Drosophila melanogaster (Fruit fly)).